The chain runs to 434 residues: Mitochondrial distribution and morphology protein 12 (434 aa).

Residues 1-434 (MSIDIDWERA…VYPSFWTFLV (434 aa)) enclose the SMP-LTD domain. A compositionally biased stretch (acidic residues) spans 70–83 (YEEDDNENFSESSE). Disordered regions lie at residues 70–141 (YEED…LRSP) and 181–277 (TPLG…LPPR). Basic and acidic residues predominate over residues 86 to 97 (SPTREPVDRYGS). The span at 215-237 (SAQSRPSTANTGNTLLSRGSMSS) shows a compositional bias: polar residues.

This sequence belongs to the MDM12 family. Component of the ER-mitochondria encounter structure (ERMES) or MDM complex, composed of MMM1, MDM10, MDM12 and MDM34. An MMM1 homodimer associates with one molecule of MDM12 on each side in a pairwise head-to-tail manner, and the SMP-LTD domains of MMM1 and MDM12 generate a continuous hydrophobic tunnel for phospholipid trafficking.

The protein resides in the mitochondrion outer membrane. Its subcellular location is the endoplasmic reticulum membrane. Functionally, component of the ERMES/MDM complex, which serves as a molecular tether to connect the endoplasmic reticulum (ER) and mitochondria. Components of this complex are involved in the control of mitochondrial shape and protein biogenesis, and function in nonvesicular lipid trafficking between the ER and mitochondria. MDM12 is required for the interaction of the ER-resident membrane protein MMM1 and the outer mitochondrial membrane-resident beta-barrel protein MDM10. The MDM12-MMM1 subcomplex functions in the major beta-barrel assembly pathway that is responsible for biogenesis of all mitochondrial outer membrane beta-barrel proteins, and acts in a late step after the SAM complex. The MDM10-MDM12-MMM1 subcomplex further acts in the TOM40-specific pathway after the action of the MDM12-MMM1 complex. Essential for establishing and maintaining the structure of mitochondria and maintenance of mtDNA nucleoids. This is Mitochondrial distribution and morphology protein 12 from Ajellomyces dermatitidis (strain ER-3 / ATCC MYA-2586) (Blastomyces dermatitidis).